We begin with the raw amino-acid sequence, 274 residues long: 4-deoxy-L-threo-5-hexosulose-uronate ketol-isomerase (274 aa).

4 residues coordinate Zn(2+): His-192, His-194, Glu-199, and His-241.

This sequence belongs to the KduI family. Zn(2+) serves as cofactor.

The catalysed reaction is 5-dehydro-4-deoxy-D-glucuronate = 3-deoxy-D-glycero-2,5-hexodiulosonate. It functions in the pathway glycan metabolism; pectin degradation; 2-dehydro-3-deoxy-D-gluconate from pectin: step 4/5. Catalyzes the isomerization of 5-dehydro-4-deoxy-D-glucuronate to 3-deoxy-D-glycero-2,5-hexodiulosonate. The protein is 4-deoxy-L-threo-5-hexosulose-uronate ketol-isomerase of Agrobacterium fabrum (strain C58 / ATCC 33970) (Agrobacterium tumefaciens (strain C58)).